Here is an 89-residue protein sequence, read N- to C-terminus: Small ribosomal subunit protein uS17 (89 aa).

It belongs to the universal ribosomal protein uS17 family. In terms of assembly, part of the 30S ribosomal subunit.

One of the primary rRNA binding proteins, it binds specifically to the 5'-end of 16S ribosomal RNA. This is Small ribosomal subunit protein uS17 from Polynucleobacter asymbioticus (strain DSM 18221 / CIP 109841 / QLW-P1DMWA-1) (Polynucleobacter necessarius subsp. asymbioticus).